The sequence spans 103 residues: Large ribosomal subunit protein bL21 (103 aa).

Belongs to the bacterial ribosomal protein bL21 family. In terms of assembly, part of the 50S ribosomal subunit. Contacts protein L20.

This protein binds to 23S rRNA in the presence of protein L20. The protein is Large ribosomal subunit protein bL21 of Desulforudis audaxviator (strain MP104C).